Consider the following 425-residue polypeptide: Serine--tRNA ligase (425 aa).

233–235 serves as a coordination point for L-serine; sequence TAE. ATP contacts are provided by residues 264–266 and Val280; that span reads RRE. Residue Glu287 participates in L-serine binding. 351 to 354 serves as a coordination point for ATP; that stretch reads EVSS. Ser387 contributes to the L-serine binding site.

It belongs to the class-II aminoacyl-tRNA synthetase family. Type-1 seryl-tRNA synthetase subfamily. As to quaternary structure, homodimer. The tRNA molecule binds across the dimer.

It localises to the cytoplasm. It carries out the reaction tRNA(Ser) + L-serine + ATP = L-seryl-tRNA(Ser) + AMP + diphosphate + H(+). It catalyses the reaction tRNA(Sec) + L-serine + ATP = L-seryl-tRNA(Sec) + AMP + diphosphate + H(+). Its pathway is aminoacyl-tRNA biosynthesis; selenocysteinyl-tRNA(Sec) biosynthesis; L-seryl-tRNA(Sec) from L-serine and tRNA(Sec): step 1/1. Catalyzes the attachment of serine to tRNA(Ser). Is also able to aminoacylate tRNA(Sec) with serine, to form the misacylated tRNA L-seryl-tRNA(Sec), which will be further converted into selenocysteinyl-tRNA(Sec). In Gemmatimonas aurantiaca (strain DSM 14586 / JCM 11422 / NBRC 100505 / T-27), this protein is Serine--tRNA ligase.